The following is a 372-amino-acid chain: Cytochrome b (372 aa).

A run of 4 helical transmembrane segments spans residues 25 to 45 (FGSM…FLAI), 69 to 90 (WTMQ…YIHI), 105 to 125 (WLSG…GYVL), and 170 to 190 (FFAL…IHII). 2 residues coordinate heme b: H75 and H89. Positions 174 and 188 each coordinate heme b. Residue H193 coordinates a ubiquinone. A run of 4 helical transmembrane segments spans residues 218–238 (YKDI…MAFA), 280–300 (LGGT…PFTH), 312–332 (LAQM…WTAT), and 339–358 (FILI…IINP).

The protein belongs to the cytochrome b family. As to quaternary structure, the cytochrome bc1 complex contains 3 respiratory subunits (MT-CYB, CYC1 and UQCRFS1), 2 core proteins (UQCRC1 and UQCRC2) and probably 6 low-molecular weight proteins. Heme b serves as cofactor.

It is found in the mitochondrion inner membrane. Component of the ubiquinol-cytochrome c reductase complex (complex III or cytochrome b-c1 complex) that is part of the mitochondrial respiratory chain. The b-c1 complex mediates electron transfer from ubiquinol to cytochrome c. Contributes to the generation of a proton gradient across the mitochondrial membrane that is then used for ATP synthesis. This Acanthophis antarcticus (Common death adder) protein is Cytochrome b (MT-CYB).